The primary structure comprises 287 residues: Putative sugar uptake protein M6_Spy1874 (287 aa).

10 helical membrane passes run 4-26 (IFYA…KIGG), 33-50 (LGMT…WLIV), 55-72 (TLQL…WSIG), 85-107 (VSVA…GVLV), 117-134 (FVVG…FYFS), 154-171 (FRAL…AVLF), 181-200 (SVIL…FMSF), 207-229 (YVIK…LLAA), 234-256 (LAIA…ILFL), and 268-285 (VVTG…LGVV).

This sequence belongs to the GRP transporter (TC 2.A.7.5) family.

It is found in the cell membrane. The chain is Putative sugar uptake protein M6_Spy1874 from Streptococcus pyogenes serotype M6 (strain ATCC BAA-946 / MGAS10394).